The following is a 161-amino-acid chain: Phosphopantetheine adenylyltransferase (161 aa).

Belongs to the eukaryotic CoaD family.

It is found in the cytoplasm. The catalysed reaction is (R)-4'-phosphopantetheine + ATP + H(+) = 3'-dephospho-CoA + diphosphate. The protein operates within cofactor biosynthesis; coenzyme A biosynthesis. Functionally, reversibly transfers an adenylyl group from ATP to 4'-phosphopantetheine, yielding dephospho-CoA (dPCoA) and pyrophosphate. This chain is Phosphopantetheine adenylyltransferase, found in Methanosarcina barkeri (strain Fusaro / DSM 804).